The primary structure comprises 198 residues: Recombination protein RecR (198 aa).

The C4-type zinc-finger motif lies at cysteine 57–cysteine 72. The Toprim domain maps to serine 80–proline 175.

Belongs to the RecR family.

Its function is as follows. May play a role in DNA repair. It seems to be involved in an RecBC-independent recombinational process of DNA repair. It may act with RecF and RecO. The sequence is that of Recombination protein RecR from Oceanobacillus iheyensis (strain DSM 14371 / CIP 107618 / JCM 11309 / KCTC 3954 / HTE831).